The following is a 439-amino-acid chain: MQVLPACQSSALKTLCPSPEAFRKLGWLPTSDEVYNEFIDDLTGRTCNEKYSSQVTLLKPIQDFKTFIENDPIVYQEFISMFEGIEQSPTNYHELCNMFNDIFRKAPLYGDLGPPVYMIMARIMNTQAGFSAFTKESLNFHFKKLFDTWGLFLSSKNSRNVLVADQFDDKHYGWFSERAKTAMMINYPGRTFEKVFICDEHVPYHGFTSYDDFFNRRFRDKDTDRPVVGGVTDTTLIGAACESLSYNVSHNVQSLDTLVIKGEAYSLKHLLHNDPFTPQFEHGSIIQGFLNVTAYHRWHSPVNGTIVKIVNVPGTYFAQAPYTIGSPIPDNDRDPPPYLKSLVYFSNIAARQIMFIEADNKDIGLIFLVFIGMTEISTCEATVCEGQHVNRGDDLGMFHFGGSSFALGLRKDSKAKILEKFAKPGTVIRINELVASVRK.

Belongs to the phosphatidylserine decarboxylase family.

The enzyme catalyses L-tryptophan + H(+) = tryptamine + CO2. It participates in secondary metabolite biosynthesis. L-tryptophan decarboxylase; part of the gene cluster that mediates the biosynthesis of psilocybin, a psychotropic tryptamine-derived natural product. The first step in the pathway is the decarboxylation of L-tryptophan to tryptamine by the decarboxylase psiD. PsiD does not decarboxylate phenylalanine, tyrosine, or 5-hydroxy- L -tryptophan (5-HTP). 4-hydroxy-L-tryptophan is accepted as substrate by psiD as well. The cytochrome P450 monooxygenase psiH then converts tryptamine to 4-hydroxytryptamine. The kinase psiK catalyzes the 4-O-phosphorylation step by converting 4-hydroxytryptamine into norbaeocystin. The methyltransferase psiM then catalyzes iterative methyl transfer to the amino group of norbaeocystin to yield psilocybin via a monomethylated intermediate, baeocystin. 4-hydroxy-6-methyl-l-tryptophancan also be converted the decarboxylase PsiD, kinase PsiK, and methyltransferase PsiM into respectively 6-methyl-norbaeocystin, 6-methylbaeocystin, and 6-methylpsilocybin. In Psilocybe cyanescens, this protein is L-tryptophan decarboxylase.